Consider the following 345-residue polypeptide: Myb/SANT-like DNA-binding domain-containing protein 4 (345 aa).

In terms of domain architecture, Myb-like spans 4–77; sequence LKRKRKSNFS…EVKRRYLDWR (74 aa). A Glycyl lysine isopeptide (Lys-Gly) (interchain with G-Cter in SUMO2) cross-link involves residue Lys9. Ser106 is subject to Phosphoserine. Glycyl lysine isopeptide (Lys-Gly) (interchain with G-Cter in SUMO2) cross-links involve residues Lys114 and Lys142. A disordered region spans residues 143-175; that stretch reads VEEEERDPQSPEFEIEEEEEMLSSVIPDSRREN. Thr188 carries the phosphothreonine modification. The stretch at 203-345 forms a coiled coil; the sequence is LLVNIEKQKL…LRIQKEGHLQ (143 aa). Residues Lys237, Lys254, and Lys273 each participate in a glycyl lysine isopeptide (Lys-Gly) (interchain with G-Cter in SUMO2) cross-link.

This is Myb/SANT-like DNA-binding domain-containing protein 4 (MSANTD4) from Homo sapiens (Human).